The chain runs to 358 residues: MSPHTEGPLFAVLKNSRARPRPRESRLRRRVHKQMNISPTPKRYNSRGYEFPRSNDEAFHPFNREPPMVPSERILPEEYRVNSQMINKLIKQNKDLTQQLDRKQDEIDRLNVLVGSLRGKLIKYTELNKKLEQAAAGARQSSPDDVLQVNRTRPREPPAGGTRLDDRLSDLYSKLETLTELVVGSAAADRGARDHVHVPSAGATRTPSSGASVSHRPLQPGAASEDDILTQESAELKGLEDQIDLLKRKLLIKRENELRKLSLNKELLDLMEKLDVSRPAGPVPSSSTPPHCDQCHKAAYQTAAANGGHGVPAGAGSGAGAGASMPSPRNPPYMSMAQVLETPTPAHRSSHKPNDTLW.

Disordered regions lie at residues 1-43, 135-166, 189-226, and 310-358; these read MSPH…TPKR, AAGA…RLDD, DRGA…ASED, and GVPA…DTLW. Positions 16–33 are enriched in basic residues; sequence SRARPRPRESRLRRRVHK. Residues 82–140 adopt a coiled-coil conformation; sequence NSQMINKLIKQNKDLTQQLDRKQDEIDRLNVLVGSLRGKLIKYTELNKKLEQAAAGARQ. The span at 203-212 shows a compositional bias: polar residues; that stretch reads ATRTPSSGAS. The stretch at 226–275 forms a coiled coil; sequence DDILTQESAELKGLEDQIDLLKRKLLIKRENELRKLSLNKELLDLMEKLD. A compositionally biased stretch (gly residues) spans 310 to 321; that stretch reads GVPAGAGSGAGA.

This sequence belongs to the SPC42 family.

The protein resides in the nucleus. It is found in the cytoplasm. Its subcellular location is the cytoskeleton. It localises to the microtubule organizing center. The protein localises to the spindle pole body. Its function is as follows. Forms a polymeric layer at the periphery of the spindle pole body (SPB) central plaque which has an essential function during SPB duplication and may facilitate attachment of the SPB to the nuclear membrane. The sequence is that of Spindle pole body component SPC42 (SPC42) from Lachancea thermotolerans (strain ATCC 56472 / CBS 6340 / NRRL Y-8284) (Yeast).